We begin with the raw amino-acid sequence, 404 residues long: Protein translocase subunit SecD (404 aa).

The next 6 helical transmembrane spans lie at 7 to 27 (HYIWLFLVIFVPALILYFNKV), 239 to 259 (LIALGVISVFMIAIYKIPGIV), 262 to 282 (IALLINGVLVLGLLSGIGAAL), 283 to 303 (TLPGIAGFILTLGMAVDSNVI), 330 to 350 (FPAIIDGNITTLLVAAVLFFL), and 357 to 377 (GFAVTLSLGVVATIITGVFVS).

This sequence belongs to the SecD/SecF family. SecD subfamily. In terms of assembly, forms a complex with SecF. Part of the essential Sec protein translocation apparatus which comprises SecA, SecYEG and auxiliary proteins SecDF. Other proteins may also be involved.

The protein resides in the cell inner membrane. Its function is as follows. Part of the Sec protein translocase complex. Interacts with the SecYEG preprotein conducting channel. SecDF uses the proton motive force (PMF) to complete protein translocation after the ATP-dependent function of SecA. The sequence is that of Protein translocase subunit SecD from Leptotrichia buccalis (strain ATCC 14201 / DSM 1135 / JCM 12969 / NCTC 10249 / C-1013-b).